The chain runs to 483 residues: Membrane-bound lytic murein transglycosylase F (483 aa).

The first 18 residues, 1–18 (MKGLIARFIAGFALLLWA), serve as a signal peptide directing secretion. Residues 19–267 (WDMVFPWQQL…RIEEKYFNHL (249 aa)) form a non-LT domain region. The segment at 269-483 (HFDYVDIQSY…SKESDSTLKE (215 aa)) is LT domain. The active site involves E312. The tract at residues 458 to 483 (QQIQNNEEQPSVPQEISKESDSTLKE) is disordered. The span at 473-483 (ISKESDSTLKE) shows a compositional bias: basic and acidic residues.

The protein in the N-terminal section; belongs to the bacterial solute-binding protein 3 family. In the C-terminal section; belongs to the transglycosylase Slt family.

It is found in the cell outer membrane. The enzyme catalyses Exolytic cleavage of the (1-&gt;4)-beta-glycosidic linkage between N-acetylmuramic acid (MurNAc) and N-acetylglucosamine (GlcNAc) residues in peptidoglycan, from either the reducing or the non-reducing ends of the peptidoglycan chains, with concomitant formation of a 1,6-anhydrobond in the MurNAc residue.. Murein-degrading enzyme that degrades murein glycan strands and insoluble, high-molecular weight murein sacculi, with the concomitant formation of a 1,6-anhydromuramoyl product. Lytic transglycosylases (LTs) play an integral role in the metabolism of the peptidoglycan (PG) sacculus. Their lytic action creates space within the PG sacculus to allow for its expansion as well as for the insertion of various structures such as secretion systems and flagella. This chain is Membrane-bound lytic murein transglycosylase F, found in Actinobacillus pleuropneumoniae serotype 5b (strain L20).